Reading from the N-terminus, the 149-residue chain is MLFRGRSHRSLDPKGRLMLPPDFRDILMSRAEGGKLVLTSFDDCVMGYPLPDWEDFERKFSTLKNPSRKMRDFRRLVIGSAELMELDGQGRVRISRSHMDYAGITKDVVLLGQGSRFEIWDQGRFDGIVTQDFDDVAAELADSGIELSL.

2 consecutive SpoVT-AbrB domains span residues 6–52 (RSHR…PLPD) and 81–124 (AELM…DQGR).

It belongs to the MraZ family. Forms oligomers.

The protein localises to the cytoplasm. It localises to the nucleoid. This chain is Transcriptional regulator MraZ, found in Nitratidesulfovibrio vulgaris (strain DSM 19637 / Miyazaki F) (Desulfovibrio vulgaris).